The primary structure comprises 166 residues: UPF0134 protein MPN_138 (166 aa).

The protein belongs to the UPF0134 family.

This is UPF0134 protein MPN_138 from Mycoplasma pneumoniae (strain ATCC 29342 / M129 / Subtype 1) (Mycoplasmoides pneumoniae).